The primary structure comprises 66 residues: Large ribosomal subunit protein bL31 (66 aa).

Residues Cys16, Cys18, Cys36, and Cys39 each contribute to the Zn(2+) site.

Belongs to the bacterial ribosomal protein bL31 family. Type A subfamily. In terms of assembly, part of the 50S ribosomal subunit. Zn(2+) serves as cofactor.

Functionally, binds the 23S rRNA. The polypeptide is Large ribosomal subunit protein bL31 (Geobacillus kaustophilus (strain HTA426)).